We begin with the raw amino-acid sequence, 314 residues long: Lipoyl synthase (314 aa).

Cys61, Cys66, Cys72, Cys87, Cys91, Cys94, and Ser301 together coordinate [4Fe-4S] cluster. A Radical SAM core domain is found at 73–290 (FGRGTATFMI…EEEAKKMGFS (218 aa)).

Belongs to the radical SAM superfamily. Lipoyl synthase family. It depends on [4Fe-4S] cluster as a cofactor.

The protein localises to the cytoplasm. It catalyses the reaction [[Fe-S] cluster scaffold protein carrying a second [4Fe-4S](2+) cluster] + N(6)-octanoyl-L-lysyl-[protein] + 2 oxidized [2Fe-2S]-[ferredoxin] + 2 S-adenosyl-L-methionine + 4 H(+) = [[Fe-S] cluster scaffold protein] + N(6)-[(R)-dihydrolipoyl]-L-lysyl-[protein] + 4 Fe(3+) + 2 hydrogen sulfide + 2 5'-deoxyadenosine + 2 L-methionine + 2 reduced [2Fe-2S]-[ferredoxin]. It participates in protein modification; protein lipoylation via endogenous pathway; protein N(6)-(lipoyl)lysine from octanoyl-[acyl-carrier-protein]: step 2/2. Catalyzes the radical-mediated insertion of two sulfur atoms into the C-6 and C-8 positions of the octanoyl moiety bound to the lipoyl domains of lipoate-dependent enzymes, thereby converting the octanoylated domains into lipoylated derivatives. In Dechloromonas aromatica (strain RCB), this protein is Lipoyl synthase.